We begin with the raw amino-acid sequence, 422 residues long: Beta-1,3-galactosyltransferase 2 (422 aa).

Topologically, residues 1 to 20 are cytoplasmic; the sequence is MLQWRRRHCCFAKMTWSPKR. A helical; Signal-anchor for type II membrane protein membrane pass occupies residues 21–43; sequence SLLRTPLTGVLSLVFLFAMFLFF. The Lumenal segment spans residues 44-422; that stretch reads NHHDWLPGRP…AGRYRHRKLH (379 aa). N-linked (GlcNAc...) asparagine glycosylation is found at Asn75, Asn98, Asn119, Asn176, and Asn226. The disordered stretch occupies residues 91-110; the sequence is LRPHTASNSSNTELSPQGVT. The segment covering 95 to 110 has biased composition (polar residues); it reads TASNSSNTELSPQGVT.

This sequence belongs to the glycosyltransferase 31 family. Mn(2+) serves as cofactor. In terms of tissue distribution, detected in brain and heart.

Its subcellular location is the golgi apparatus membrane. The catalysed reaction is an N-acetyl-beta-D-glucosaminyl derivative + UDP-alpha-D-galactose = a beta-D-galactosyl-(1-&gt;3)-N-acetyl-beta-D-glucosaminyl derivative + UDP + H(+). It carries out the reaction a beta-D-GlcNAc-(1-&gt;3)-beta-D-Gal-(1-&gt;4)-beta-D-Glc-(1&lt;-&gt;1)-Cer(d18:1(4E)) + UDP-alpha-D-galactose = a beta-D-Gal-(1-&gt;3)-beta-D-GlcNAc-(1-&gt;3)-beta-D-Gal-(1-&gt;4)-beta-D-Glc-(1&lt;-&gt;1')-Cer(d18:1(4E)) + UDP + H(+). The enzyme catalyses a neolactoside IV(3)-beta-GlcNAc-nLc4Cer(d18:1(4E)) + UDP-alpha-D-galactose = a neolactoside IV(3)-beta-[Gal-beta-(1-&gt;3)-GlcNAc]-nLc4Cer(d18:1(4E)) + UDP + H(+). Its pathway is protein modification; protein glycosylation. Its function is as follows. Beta-1,3-galactosyltransferase that transfers galactose from UDP-galactose to substrates with a terminal beta-N-acetylglucosamine (beta-GlcNAc) residue. Can also utilize substrates with a terminal galactose residue, albeit with lower efficiency. Involved in the biosynthesis of the carbohydrate moieties of glycolipids and glycoproteins. The sequence is that of Beta-1,3-galactosyltransferase 2 from Mus musculus (Mouse).